Reading from the N-terminus, the 118-residue chain is Large ribosomal subunit protein bL19 (118 aa).

The protein belongs to the bacterial ribosomal protein bL19 family.

Its function is as follows. This protein is located at the 30S-50S ribosomal subunit interface and may play a role in the structure and function of the aminoacyl-tRNA binding site. This chain is Large ribosomal subunit protein bL19, found in Coprothermobacter proteolyticus (strain ATCC 35245 / DSM 5265 / OCM 4 / BT).